We begin with the raw amino-acid sequence, 183 residues long: Gamma-crystallin N-B (183 aa).

4 Beta/gamma crystallin 'Greek key' domains span residues 6–46 (GKIC…RVES), 47–89 (GAWI…RPIR), 95–136 (YRME…RVFG), and 138–180 (GAWV…RRIV).

Belongs to the beta/gamma-crystallin family. In terms of assembly, monomer.

Functionally, crystallins are the dominant structural components of the vertebrate eye lens. This chain is Gamma-crystallin N-B (crygnb), found in Danio rerio (Zebrafish).